A 385-amino-acid chain; its full sequence is Trans-enoyl reductase poxH (385 aa).

Gln-64–Ser-67 is an NADP(+) binding site. Substrate is bound at residue Pro-156 to Ile-163. Residues Ser-199–Val-202, Ser-223–Asp-226, Tyr-241, and Leu-289–Gly-290 each bind NADP(+). Residue His-309 to Leu-313 coordinates substrate. Lys-372–Arg-373 contributes to the NADP(+) binding site.

Belongs to the zinc-containing alcohol dehydrogenase family. As to quaternary structure, monomer.

It participates in secondary metabolite biosynthesis. Trans-enoyl reductase; part of the gene cluster that mediates the biosynthesis of oxaleimides, cytotoxic compounds containing an unusual disubstituted succinimide moiety. The first step of the pathway is provided by the HR-PKS poxF that serves in a new mode of collaborative biosynthesis with the PKS-NRPS poxE, by providing the olefin containing amino acid substrate via the synthesis of an ACP-bound dec-4-enoate. The cytochrome P450 monooxygenase poxM-catalyzed oxidation at the alpha-position creates the enzyme-bound 2-hydroxydec-4-enoyl-ACP thioester, which may be prone to spontaneous hydrolysis to yield 2-hydroxydec-4-enoic acid due to increased electrophilicity of the carbonyl. 2-hydroxydec-4-enoic acid can then be further oxidized by poxM to yield the alpha-ketoacid 2-oxodec-4-enoicacid, which is reductively aminated by the aminotransferase poxL to yield (S,E)-2-aminodec-4-enoic acid. The Hybrid PKS-NRPS synthetase poxE then performs condensation between the octaketide product of its PKS modules and the amino group of (S,E)-2-aminodec-4-enoic acid which is activated and incorporated by the adenylation domain. The resulting aminoacyl product can be cyclized by the Diels-Alderase PoxQ and reductively released by the reductive (R) domain of poxE to yield an aldehyde intermediate. The released aldehyde is then substrate for a Knoevenagel condensation by the hydrolyase poxO followed by an oxidation at the 5-position of the pyrrolidone ring. The presence of the olefin from the amino acid building block allows for migration of the substituted allyl group to occur. This allylic transposition reaction takes place in a conjugate addition, semipinacol-like fashion to yield a succinimide intermediate. Iterative two-electron oxidations of the C7 methyl of the succinimide intermediate to the carboxylic acid can be catalyzed by one of two remaining cytochrome P450 monooxygenasess poxC or poxD to yield oxaleimide A. Subsequent oxidation yields the maleimide scaffold oxaleimide I. Both oxaleimide A and oxaleimide I can undergo oxidative modifications in the decalin ring to yield the series of products oxaleimides B to H. The polypeptide is Trans-enoyl reductase poxH (Penicillium oxalicum (strain 114-2 / CGMCC 5302) (Penicillium decumbens)).